We begin with the raw amino-acid sequence, 453 residues long: tRNA-2-methylthio-N(6)-dimethylallyladenosine synthase (453 aa).

Residues 21 to 137 (RGVYISTYGC…LPQLVAKSFA (117 aa)) form the MTTase N-terminal domain. Residues Cys-30, Cys-66, Cys-100, Cys-174, Cys-178, and Cys-181 each contribute to the [4Fe-4S] cluster site. In terms of domain architecture, Radical SAM core spans 160–389 (RNPGVATYVN…FDVHEAMAFE (230 aa)). One can recognise a TRAM domain in the interval 392–453 (KRYEGTTMKV…FPAVFRGEMI (62 aa)).

The protein belongs to the methylthiotransferase family. MiaB subfamily. Monomer. [4Fe-4S] cluster serves as cofactor.

The protein localises to the cytoplasm. The catalysed reaction is N(6)-dimethylallyladenosine(37) in tRNA + (sulfur carrier)-SH + AH2 + 2 S-adenosyl-L-methionine = 2-methylsulfanyl-N(6)-dimethylallyladenosine(37) in tRNA + (sulfur carrier)-H + 5'-deoxyadenosine + L-methionine + A + S-adenosyl-L-homocysteine + 2 H(+). Catalyzes the methylthiolation of N6-(dimethylallyl)adenosine (i(6)A), leading to the formation of 2-methylthio-N6-(dimethylallyl)adenosine (ms(2)i(6)A) at position 37 in tRNAs that read codons beginning with uridine. This Bdellovibrio bacteriovorus (strain ATCC 15356 / DSM 50701 / NCIMB 9529 / HD100) protein is tRNA-2-methylthio-N(6)-dimethylallyladenosine synthase.